The chain runs to 173 residues: Lipoprotein signal peptidase (173 aa).

A run of 2 helical transmembrane segments spans residues 67 to 87 (WISL…PHLG) and 92 to 112 (MGFG…FAFG). Catalysis depends on residues Asp116 and Asp132. Residues 125-145 (FPVFNGADIAINLGLACLLIG) traverse the membrane as a helical segment. A disordered region spans residues 151-173 (SRTPAPARPASKQIREPTDTTGG). Basic and acidic residues predominate over residues 163-173 (QIREPTDTTGG).

This sequence belongs to the peptidase A8 family.

It is found in the cell inner membrane. It catalyses the reaction Release of signal peptides from bacterial membrane prolipoproteins. Hydrolyzes -Xaa-Yaa-Zaa-|-(S,diacylglyceryl)Cys-, in which Xaa is hydrophobic (preferably Leu), and Yaa (Ala or Ser) and Zaa (Gly or Ala) have small, neutral side chains.. The protein operates within protein modification; lipoprotein biosynthesis (signal peptide cleavage). This protein specifically catalyzes the removal of signal peptides from prolipoproteins. This chain is Lipoprotein signal peptidase, found in Gloeobacter violaceus (strain ATCC 29082 / PCC 7421).